The primary structure comprises 466 residues: 3-isopropylmalate dehydratase large subunit (466 aa).

Positions 347, 407, and 410 each coordinate [4Fe-4S] cluster.

This sequence belongs to the aconitase/IPM isomerase family. LeuC type 1 subfamily. Heterodimer of LeuC and LeuD. [4Fe-4S] cluster is required as a cofactor.

It carries out the reaction (2R,3S)-3-isopropylmalate = (2S)-2-isopropylmalate. It functions in the pathway amino-acid biosynthesis; L-leucine biosynthesis; L-leucine from 3-methyl-2-oxobutanoate: step 2/4. Catalyzes the isomerization between 2-isopropylmalate and 3-isopropylmalate, via the formation of 2-isopropylmaleate. This Shigella boydii serotype 4 (strain Sb227) protein is 3-isopropylmalate dehydratase large subunit.